A 308-amino-acid polypeptide reads, in one-letter code: Ribosomal protein L11 methyltransferase (308 aa).

Positions 157, 178, 200, and 243 each coordinate S-adenosyl-L-methionine.

This sequence belongs to the methyltransferase superfamily. PrmA family.

It localises to the cytoplasm. The enzyme catalyses L-lysyl-[protein] + 3 S-adenosyl-L-methionine = N(6),N(6),N(6)-trimethyl-L-lysyl-[protein] + 3 S-adenosyl-L-homocysteine + 3 H(+). In terms of biological role, methylates ribosomal protein L11. This Pelotomaculum thermopropionicum (strain DSM 13744 / JCM 10971 / SI) protein is Ribosomal protein L11 methyltransferase.